The primary structure comprises 368 residues: DNA replication and repair protein RecF (368 aa).

Residue G30–T37 coordinates ATP.

Belongs to the RecF family.

The protein resides in the cytoplasm. Functionally, the RecF protein is involved in DNA metabolism; it is required for DNA replication and normal SOS inducibility. RecF binds preferentially to single-stranded, linear DNA. It also seems to bind ATP. The chain is DNA replication and repair protein RecF from Streptococcus pyogenes serotype M12 (strain MGAS9429).